The chain runs to 810 residues: Probable inorganic carbon transporter subunit DabA (810 aa).

4 residues coordinate Zn(2+): C347, D349, H509, and C524.

The protein belongs to the inorganic carbon transporter (TC 9.A.2) DabA family. In terms of assembly, forms a complex with DabB. The cofactor is Zn(2+).

It is found in the cell inner membrane. Part of an energy-coupled inorganic carbon pump. The protein is Probable inorganic carbon transporter subunit DabA of Marinomonas sp. (strain MWYL1).